Consider the following 110-residue polypeptide: Dermcidin (110 aa).

A signal peptide spans 1–19 (MRFMTLLFLTALAGALVCA). The interval 24–70 (AASAPGSGNPCHEASAAQKENAGEDPGLARQAPKPRKQRSSLLEKGL) is disordered. Ser-30 and Ser-38 each carry an O-linked (Xyl...) (chondroitin sulfate) serine glycan. A propeptide spanning residues 50-62 (GLARQAPKPRKQR) is cleaved from the precursor. Residues 64–108 (SLLEKGLDGAKKAVGGLGKLGKDAVEDLESVGKGAVHDVKDVLDS) form a helical membrane-spanning segment. Glu-67 provides a ligand contact to Zn(2+). Lys-68 carries the post-translational modification N6-acetyllysine. Residues Asp-71, Asp-86, Asp-90, His-100, and Asp-104 each coordinate Zn(2+). Leu-110 is a propeptide.

In terms of assembly, homohexamer. The cofactor is Mn(2+). Requires Zn(2+) as cofactor. In terms of tissue distribution, detected in urine (at protein level). Constitutively expressed in eccrine sweat gland cells (at protein level). Secreted into the sweat at a concentration of 1-10 micrograms/ml.

It localises to the secreted. Its subcellular location is the membrane. Found in sweat, has an antimicrobial activity during early bacterial colonization. The secreted peptide assembles into homohexameric complexes that can associate with and also insert into pathogen membranes. Once inserted in bacteria membranes forms anion channels probably altering the transmembrane potential essential for bacterial survival. Highly effective against E.coli, E.faecalis, S.aureus and C.albicans. Optimal pH and salt concentration resemble the conditions in sweat. Also exhibits proteolytic activity, cleaving on the C-terminal side of Arg and, to a lesser extent, Lys residues. In terms of biological role, promotes survival of neurons and displays phosphatase activity. It may bind IgG. In Homo sapiens (Human), this protein is Dermcidin.